Here is a 329-residue protein sequence, read N- to C-terminus: Cytoplasmic phosphatidylinositol transfer protein 1 (329 aa).

A disordered region spans residues 267–329; it reads SHGGYSSAPS…GNKPSLAKPE (63 aa).

It belongs to the PtdIns transfer protein family. PI transfer class IIB subfamily.

Its subcellular location is the cytoplasm. The enzyme catalyses a 1,2-diacyl-sn-glycero-3-phospho-(1D-myo-inositol)(in) = a 1,2-diacyl-sn-glycero-3-phospho-(1D-myo-inositol)(out). The catalysed reaction is a 1,2-diacyl-sn-glycero-3-phosphate(in) = a 1,2-diacyl-sn-glycero-3-phosphate(out). Catalyzes the transfer of phosphatidylinositol (PI) and phosphatidic acid (PA) between membranes. Binds PA derived from the phospholipase D signaling pathway and among the cellular PA species, preferably binds to the C16:0/16:1 and C16:1/18:1 PA species. In Xenopus tropicalis (Western clawed frog), this protein is Cytoplasmic phosphatidylinositol transfer protein 1 (pitpnc1).